Consider the following 81-residue polypeptide: Beta-toxin Ct13 (81 aa).

Residues 1 to 18 (MKVLILIIASVLLIGVEC) form the signal peptide. The region spanning 19 to 78 (KDGFPVDSEGCILLPCATRAYCSVNCKFMKGSGGSCDTLACHCKGLPEDAKVQDKPTNKC) is the LCN-type CS-alpha/beta domain. 4 cysteine pairs are disulfide-bonded: Cys-29–Cys-78, Cys-34–Cys-54, Cys-40–Cys-59, and Cys-44–Cys-61. Cys-78 is subject to Cysteine amide.

Belongs to the long (4 C-C) scorpion toxin superfamily. Sodium channel inhibitor family. Beta subfamily. As to expression, expressed by the venom gland.

The protein localises to the secreted. Its function is as follows. Beta toxins bind voltage-independently at site-4 of sodium channels (Nav) and shift the voltage of activation toward more negative potentials thereby affecting sodium channel activation and promoting spontaneous and repetitive firing. The polypeptide is Beta-toxin Ct13 (Centruroides tecomanus (Scorpion)).